The chain runs to 204 residues: Glutathione S-transferase (204 aa).

In terms of domain architecture, GST N-terminal spans 3–80 (PSYKLTYCPV…YLGKQFGLSG (78 aa)). Glutathione is bound by residues Tyr9, Trp40, Lys44, 50-52 (GKT), and 64-65 (QS). Residues 82–204 (DDWENLEIDM…WVAKRPPTDL (123 aa)) form the GST C-terminal domain.

Belongs to the GST superfamily. Sigma family.

It carries out the reaction RX + glutathione = an S-substituted glutathione + a halide anion + H(+). The sequence is that of Glutathione S-transferase from Blattella germanica (German cockroach).